We begin with the raw amino-acid sequence, 143 residues long: Large ribosomal subunit protein uL13 (143 aa).

It belongs to the universal ribosomal protein uL13 family. As to quaternary structure, part of the 50S ribosomal subunit.

This protein is one of the early assembly proteins of the 50S ribosomal subunit, although it is not seen to bind rRNA by itself. It is important during the early stages of 50S assembly. The polypeptide is Large ribosomal subunit protein uL13 (Prochlorococcus marinus (strain MIT 9301)).